Reading from the N-terminus, the 336-residue chain is Adenylosuccinate synthetase (336 aa).

GTP-binding positions include 12-18 and 42-44; these read GDEGKGK and GHS. Aspartate 13 (proton acceptor) is an active-site residue. Mg(2+) contacts are provided by aspartate 13 and glycine 42. IMP-binding positions include 13–16, 40–43, threonine 127, arginine 141, glutamine 179, threonine 194, and arginine 256; these read DEGK and NAGH. Histidine 43 (proton donor) is an active-site residue. 252–258 is a substrate binding site; that stretch reads TVTGRRR. Residues arginine 258, 284–286, and 324–326 contribute to the GTP site; these read CLD and STG.

The protein belongs to the adenylosuccinate synthetase family. In terms of assembly, homodimer. Mg(2+) is required as a cofactor.

It localises to the cytoplasm. The enzyme catalyses IMP + L-aspartate + GTP = N(6)-(1,2-dicarboxyethyl)-AMP + GDP + phosphate + 2 H(+). It functions in the pathway purine metabolism; AMP biosynthesis via de novo pathway; AMP from IMP: step 1/2. Plays an important role in the de novo pathway of purine nucleotide biosynthesis. Catalyzes the first committed step in the biosynthesis of AMP from IMP. The chain is Adenylosuccinate synthetase from Methanococcus aeolicus (strain ATCC BAA-1280 / DSM 17508 / OCM 812 / Nankai-3).